A 279-amino-acid polypeptide reads, in one-letter code: Undecaprenyl-diphosphatase (279 aa).

6 helical membrane passes run 45 to 65, 85 to 105, 113 to 133, 188 to 208, 226 to 246, and 255 to 275; these read FVEMFNIVIQLGAIMAVIVIY, WQLWLKVVIACIPSILIALPF, FNFMIPIAIALIFYGFVFIWV, SVAADFTFFLAIPTMFGYSGL, LILLVASLIAFVVSLYVIRFL, and FTIFGKYRIVLGSLLILYWLV.

It belongs to the UppP family.

Its subcellular location is the cell membrane. It catalyses the reaction di-trans,octa-cis-undecaprenyl diphosphate + H2O = di-trans,octa-cis-undecaprenyl phosphate + phosphate + H(+). In terms of biological role, catalyzes the dephosphorylation of undecaprenyl diphosphate (UPP). Confers resistance to bacitracin. The sequence is that of Undecaprenyl-diphosphatase from Streptococcus agalactiae serotype Ia (strain ATCC 27591 / A909 / CDC SS700).